We begin with the raw amino-acid sequence, 1029 residues long: MPLSFEGTFKAKRNVNLGGKRVSNDRAQLLRKAAMERKNREEERKAENNSVAVQSLSRGFLARRKFKQDFRERWIYKYTKSGRTSIRFNTLEDIKCSISLLVLFAEPDIDLPFVSQVAHNILVWLENLIPLSNGMDDTPKSHLKVKILKVQETLSNSNDSWLWQRFSSLLLNCLVSSINSHRIEGTDTSAETSLLHCLAYVAPYLKSSELSTYYDSVMTFYAQIYPKQNMTNLEDIMSLSLLTPVSSKTDENANSSSAFLFHVLASDCFSSIENCIPPDLIIDKVFSSSLQLSEEACISSLLNLGMIKVFSLAGNCLHLLHTEYKNSSLWKFCSYILDALYVFSGESVNSRIQVVSDVDDDEDDENAFSQNYYSHLQMVAKHFSKNYANQSGIVQRSFAECISSTFITKAFKLVSSNTLQAMSHFYATMIKLFPSNRTSILMYISLVETNEGSLTRSFSRFSWDMFSESPVYQLFHKKFDVQNVLKNDSGYWFQLQLLIDVYSRMLFTMIDDEFHNDKQNPLYPVMAEFCTVLKNLVLGLYWDVQAAKDVDCKSVVDISQLRVSSTSLLQQLYRINSRKQFLPEDFFLMSEYFNLNEFEANALQESELASHAEAEINITYKFDNFSESRPRLNILNNCSFFLPFHFRIHLLQQLLLLDKQANGYAQPFGHLKHAVIRRNRIFDDGFDAFYNFGKLLKGPIRITFVDEHGVVEEGIDGGGLTKEFLTSICKTVFDINYGLFSETKAHLLYPNTHAYAQDVERLRCYEFLGMLIGKCIYEGIQIDAAFASFFVAKWLGHPSYFDDLTSLDPNLYEGLVFLKNYDGDVENDMALNFTVVHEEFGVRNVIDLIPNGSNISVTNENRLQYIHLVSNYYLNARLSRQCRAFTNGFTQIIDPHWLAMFHESEIQILVGGDPVPIDIDDLRRHTVYAGGYEPNSPTIVLFWEVLREFEEEDKRSFVKFVTSVARPPILGFKALMPSFCIRVNGEDETRLPTASTCVNLLKLPMYSTKQTLRDKLLTAVRSGVGFGFS.

Residues 46 to 75 form the IQ domain; that stretch reads AENNSVAVQSLSRGFLARRKFKQDFRERWI. The 338-residue stretch at 692–1029 folds into the HECT domain; sequence FGKLLKGPIR…VRSGVGFGFS (338 aa). Cys-997 functions as the Glycyl thioester intermediate in the catalytic mechanism.

It is found in the cytoplasm. It localises to the nucleus. The enzyme catalyses S-ubiquitinyl-[E2 ubiquitin-conjugating enzyme]-L-cysteine + [acceptor protein]-L-lysine = [E2 ubiquitin-conjugating enzyme]-L-cysteine + N(6)-ubiquitinyl-[acceptor protein]-L-lysine.. Functionally, probable E3 ubiquitin-protein ligase which mediates ubiquitination and subsequent proteasomal degradation of target proteins. The sequence is that of Probable E3 ubiquitin protein ligase C167.07c from Schizosaccharomyces pombe (strain 972 / ATCC 24843) (Fission yeast).